Reading from the N-terminus, the 102-residue chain is Large ribosomal subunit protein uL24 (102 aa).

Belongs to the universal ribosomal protein uL24 family. Part of the 50S ribosomal subunit.

In terms of biological role, one of two assembly initiator proteins, it binds directly to the 5'-end of the 23S rRNA, where it nucleates assembly of the 50S subunit. One of the proteins that surrounds the polypeptide exit tunnel on the outside of the subunit. This is Large ribosomal subunit protein uL24 from Lysinibacillus sphaericus (strain C3-41).